Here is a 291-residue protein sequence, read N- to C-terminus: N-acetylmannosamine kinase (291 aa).

Residues 5–12 and 132–139 each bind ATP; these read AIDIGGTK and GVGGGVVS. Residues His156, Cys166, Cys168, and Cys173 each coordinate Zn(2+).

Belongs to the ROK (NagC/XylR) family. NanK subfamily. Homodimer.

It catalyses the reaction an N-acyl-D-mannosamine + ATP = an N-acyl-D-mannosamine 6-phosphate + ADP + H(+). Its pathway is amino-sugar metabolism; N-acetylneuraminate degradation; D-fructose 6-phosphate from N-acetylneuraminate: step 2/5. In terms of biological role, catalyzes the phosphorylation of N-acetylmannosamine (ManNAc) to ManNAc-6-P. The polypeptide is N-acetylmannosamine kinase (Escherichia coli O157:H7).